A 90-amino-acid polypeptide reads, in one-letter code: NELL2-interacting cell ontogeny regulator 1 (90 aa).

Residues 1–28 form the signal peptide; it reads MAPALRSLLSPRTLLLLLLSLALLGARA.

It belongs to the NICOL family. As to quaternary structure, interacts with NELL2; triggers epididymal differentiation. Interacts with cell surface receptor TFRC; the interaction mediates uptake of NICOL1 into fibroblasts. In terms of tissue distribution, expression is enriched in both male and female reproductive organs, including the testis, epididymis, seminal vesicles, coagulating glands, ovary and uterus, and in various non-reproductive organs such as brain, thymus and liver. In testis, expressed in both germ cells and Sertoli cells. Also expressed at low levels in the kidney. Expressed during neocortex and cerebellum development.

It is found in the secreted. It localises to the cytoplasm. The protein localises to the perinuclear region. MRNA-binding protein which interacts with a range of target mRNAs including SERPINE1, ACTA2, CCN2 and COL4A1 and may promote extracellular matrix production. Binds to the 3'-UTR of SERPINE1 mRNA and stabilizes the mRNA, possibly by competing for binding with SERBP1 and preventing SERBP1-mediated mRNA degradation. Also binds to the 3'-UTR of ACTA2. Testis-derived lumicrine factor that triggers epididymal differentiation and sperm maturation. The protein is NELL2-interacting cell ontogeny regulator 1 of Mus musculus (Mouse).